The chain runs to 198 residues: Ribonuclease HII (198 aa).

In terms of domain architecture, RNase H type-2 spans 11 to 198 (TCIAGVDEVG…APVKRALGLA (188 aa)). A divalent metal cation-binding residues include aspartate 17, glutamate 18, and aspartate 109.

It belongs to the RNase HII family. Requires Mn(2+) as cofactor. The cofactor is Mg(2+).

The protein localises to the cytoplasm. The enzyme catalyses Endonucleolytic cleavage to 5'-phosphomonoester.. Endonuclease that specifically degrades the RNA of RNA-DNA hybrids. The chain is Ribonuclease HII from Pectobacterium carotovorum subsp. carotovorum (strain PC1).